The sequence spans 864 residues: Leucine--tRNA ligase (864 aa).

Positions 42-52 match the 'HIGH' region motif; sequence PYPSGKLHMGH. The 'KMSKS' region motif lies at 624-628; that stretch reads KMSKS. Position 627 (Lys627) interacts with ATP.

Belongs to the class-I aminoacyl-tRNA synthetase family.

It localises to the cytoplasm. The catalysed reaction is tRNA(Leu) + L-leucine + ATP = L-leucyl-tRNA(Leu) + AMP + diphosphate. This Burkholderia mallei (strain ATCC 23344) protein is Leucine--tRNA ligase.